Reading from the N-terminus, the 108-residue chain is Small ribosomal subunit protein uS10 (108 aa).

This sequence belongs to the universal ribosomal protein uS10 family. In terms of assembly, part of the 30S ribosomal subunit.

Functionally, involved in the binding of tRNA to the ribosomes. The polypeptide is Small ribosomal subunit protein uS10 (Rhodopirellula baltica (strain DSM 10527 / NCIMB 13988 / SH1)).